Here is a 298-residue protein sequence, read N- to C-terminus: Nucleoid occlusion protein (298 aa).

Positions 152–171 (EALAQRLGKGQSTVANKLRL) form a DNA-binding region, H-T-H motif.

This sequence belongs to the ParB family.

It is found in the cytoplasm. Its subcellular location is the nucleoid. Its function is as follows. Effects nucleoid occlusion by binding relatively nonspecifically to DNA and preventing the assembly of the division machinery in the vicinity of the nucleoid, especially under conditions that disturb the cell cycle. It helps to coordinate cell division and chromosome segregation by preventing the formation of the Z ring through the nucleoid, which would cause chromosome breakage. The sequence is that of Nucleoid occlusion protein from Lysinibacillus sphaericus (strain C3-41).